Consider the following 246-residue polypeptide: NADH-quinone oxidoreductase subunit C (246 aa).

It belongs to the complex I 30 kDa subunit family. NDH-1 is composed of 14 different subunits. Subunits NuoB, C, D, E, F, and G constitute the peripheral sector of the complex.

It is found in the cell inner membrane. The catalysed reaction is a quinone + NADH + 5 H(+)(in) = a quinol + NAD(+) + 4 H(+)(out). Its function is as follows. NDH-1 shuttles electrons from NADH, via FMN and iron-sulfur (Fe-S) centers, to quinones in the respiratory chain. The immediate electron acceptor for the enzyme in this species is believed to be ubiquinone. Couples the redox reaction to proton translocation (for every two electrons transferred, four hydrogen ions are translocated across the cytoplasmic membrane), and thus conserves the redox energy in a proton gradient. The protein is NADH-quinone oxidoreductase subunit C of Halorhodospira halophila (strain DSM 244 / SL1) (Ectothiorhodospira halophila (strain DSM 244 / SL1)).